Here is a 417-residue protein sequence, read N- to C-terminus: Gamma-glutamyl phosphate reductase (417 aa).

Belongs to the gamma-glutamyl phosphate reductase family.

It is found in the cytoplasm. It carries out the reaction L-glutamate 5-semialdehyde + phosphate + NADP(+) = L-glutamyl 5-phosphate + NADPH + H(+). It participates in amino-acid biosynthesis; L-proline biosynthesis; L-glutamate 5-semialdehyde from L-glutamate: step 2/2. Its function is as follows. Catalyzes the NADPH-dependent reduction of L-glutamate 5-phosphate into L-glutamate 5-semialdehyde and phosphate. The product spontaneously undergoes cyclization to form 1-pyrroline-5-carboxylate. The chain is Gamma-glutamyl phosphate reductase from Escherichia coli O7:K1 (strain IAI39 / ExPEC).